The primary structure comprises 213 residues: Urease accessory protein UreG (213 aa).

A GTP-binding site is contributed by 10–17 (GPVGSGKT).

This sequence belongs to the SIMIBI class G3E GTPase family. UreG subfamily. As to quaternary structure, homodimer. UreD, UreF and UreG form a complex that acts as a GTP-hydrolysis-dependent molecular chaperone, activating the urease apoprotein by helping to assemble the nickel containing metallocenter of UreC. The UreE protein probably delivers the nickel.

The protein localises to the cytoplasm. Functionally, facilitates the functional incorporation of the urease nickel metallocenter. This process requires GTP hydrolysis, probably effectuated by UreG. In Deinococcus radiodurans (strain ATCC 13939 / DSM 20539 / JCM 16871 / CCUG 27074 / LMG 4051 / NBRC 15346 / NCIMB 9279 / VKM B-1422 / R1), this protein is Urease accessory protein UreG.